The primary structure comprises 241 residues: Phycocyanobilin:ferredoxin oxidoreductase (241 aa).

Belongs to the HY2 family.

The enzyme catalyses (2R,3Z)-phycocyanobilin + 4 oxidized [2Fe-2S]-[ferredoxin] = biliverdin IXalpha + 4 reduced [2Fe-2S]-[ferredoxin] + 4 H(+). In terms of biological role, catalyzes the four-electron reduction of biliverdin IX-alpha (2-electron reduction at both the A and D rings); the reaction proceeds via an isolatable 2-electron intermediate, 181,182-dihydrobiliverdin. The polypeptide is Phycocyanobilin:ferredoxin oxidoreductase (Prochlorococcus marinus (strain MIT 9515)).